Here is a 170-residue protein sequence, read N- to C-terminus: Myosin regulatory light chain 2, skeletal muscle isoform (170 aa).

Ala2 carries the n,N,N-trimethylalanine modification. Residues Ser16 and Ser17 each carry the phosphoserine modification. 2 positions are modified to phosphothreonine: Thr26 and Thr36. An EF-hand 1 domain is found at 26 to 61 (TQIQEFKEAFTVIDQNRDGIIDKEDLRDTFAAMGRL). Asp39, Asn41, Asp43, and Asp50 together coordinate Ca(2+). Ser76 bears the Phosphoserine mark. EF-hand domains follow at residues 96 to 131 (DPED…QCDR) and 132 to 167 (FSQE…GDAK). Thr102 is subject to Phosphothreonine.

In terms of assembly, myosin is a hexamer of 2 heavy chains and 4 light chains.

Its function is as follows. Plays a role in muscle contraction. The polypeptide is Myosin regulatory light chain 2, skeletal muscle isoform (Bos taurus (Bovine)).